A 281-amino-acid polypeptide reads, in one-letter code: Ribosomal RNA small subunit methyltransferase I (281 aa).

Belongs to the methyltransferase superfamily. RsmI family.

It is found in the cytoplasm. The enzyme catalyses cytidine(1402) in 16S rRNA + S-adenosyl-L-methionine = 2'-O-methylcytidine(1402) in 16S rRNA + S-adenosyl-L-homocysteine + H(+). In terms of biological role, catalyzes the 2'-O-methylation of the ribose of cytidine 1402 (C1402) in 16S rRNA. This Pasteurella multocida (strain Pm70) protein is Ribosomal RNA small subunit methyltransferase I.